The chain runs to 330 residues: MGGIPSEQSPCALGCERQALVQVLRSYSQLVKPKIIALLLMTTAGAMWMAGNTDPFRFFITLLGGGIAAAAANVINMVYDTDIDRMMERTRHRPLPSGRIRARDALIFSGILALAAFGLLAIFTNLLAAGLAMSGILVYVGVYTHWLKRSSTQNIVIGGAAGAIPPLVGWAATTGELSWAAWVMFAIIFLWTPPHFWALAILKREDYARAGVPMLPVVAGERITAAQILLYALLMVPVSLLLVYPLGMLGSFYLSAAALLGSLLVWKAVQLLQDPCDRDRAASLFTFANLYLLLLCGAMGLDRWSLTHILWSQATASLQGIYTTLIALAS.

The next 9 membrane-spanning stretches (helical) occupy residues 30 to 50 (LVKP…MWMA), 58 to 78 (FFIT…INMV), 106 to 126 (LIFS…FTNL), 127 to 147 (LAAG…THWL), 155 to 175 (IVIG…ATTG), 182 to 202 (WVMF…LAIL), 228 to 248 (ILLY…PLGM), 249 to 269 (LGSF…WKAV), and 281 to 301 (AASL…AMGL).

This sequence belongs to the UbiA prenyltransferase family. Protoheme IX farnesyltransferase subfamily.

The protein localises to the cell inner membrane. The catalysed reaction is heme b + (2E,6E)-farnesyl diphosphate + H2O = Fe(II)-heme o + diphosphate. It participates in porphyrin-containing compound metabolism; heme O biosynthesis; heme O from protoheme: step 1/1. Functionally, converts heme B (protoheme IX) to heme O by substitution of the vinyl group on carbon 2 of heme B porphyrin ring with a hydroxyethyl farnesyl side group. This chain is Protoheme IX farnesyltransferase, found in Synechococcus sp. (strain JA-2-3B'a(2-13)) (Cyanobacteria bacterium Yellowstone B-Prime).